The chain runs to 61 residues: Small ribosomal subunit protein uS14 (61 aa).

Residues cysteine 24, cysteine 27, cysteine 40, and cysteine 43 each coordinate Zn(2+).

The protein belongs to the universal ribosomal protein uS14 family. Zinc-binding uS14 subfamily. As to quaternary structure, part of the 30S ribosomal subunit. Contacts proteins S3 and S10. It depends on Zn(2+) as a cofactor.

In terms of biological role, binds 16S rRNA, required for the assembly of 30S particles and may also be responsible for determining the conformation of the 16S rRNA at the A site. The sequence is that of Small ribosomal subunit protein uS14 from Syntrophotalea carbinolica (strain DSM 2380 / NBRC 103641 / GraBd1) (Pelobacter carbinolicus).